The following is a 143-amino-acid chain: Transcriptional regulator MraZ (143 aa).

SpoVT-AbrB domains lie at 5–47 and 76–119; these read EYQH…PLTE and AMEG…AKER.

This sequence belongs to the MraZ family. In terms of assembly, forms oligomers.

The protein resides in the cytoplasm. Its subcellular location is the nucleoid. This is Transcriptional regulator MraZ from Lactobacillus delbrueckii subsp. bulgaricus (strain ATCC 11842 / DSM 20081 / BCRC 10696 / JCM 1002 / NBRC 13953 / NCIMB 11778 / NCTC 12712 / WDCM 00102 / Lb 14).